The primary structure comprises 194 residues: Adenylate kinase (194 aa).

Residue G11–T16 participates in ATP binding. The segment at S31–V60 is NMP. AMP-binding positions include T32, R37, H58–V60, G86–R89, and Q93. The interval N127–D137 is LID. Residue R128 coordinates ATP. AMP contacts are provided by R134 and R145. G173 contributes to the ATP binding site.

This sequence belongs to the adenylate kinase family. Monomer.

The protein localises to the cytoplasm. The enzyme catalyses AMP + ATP = 2 ADP. Its pathway is purine metabolism; AMP biosynthesis via salvage pathway; AMP from ADP: step 1/1. Catalyzes the reversible transfer of the terminal phosphate group between ATP and AMP. Plays an important role in cellular energy homeostasis and in adenine nucleotide metabolism. The sequence is that of Adenylate kinase from Porphyromonas gingivalis (strain ATCC 33277 / DSM 20709 / CIP 103683 / JCM 12257 / NCTC 11834 / 2561).